Reading from the N-terminus, the 126-residue chain is Large ribosomal subunit protein bL20c (126 aa).

It belongs to the bacterial ribosomal protein bL20 family.

Its subcellular location is the plastid. It is found in the chloroplast. Its function is as follows. Binds directly to 23S ribosomal RNA and is necessary for the in vitro assembly process of the 50S ribosomal subunit. It is not involved in the protein synthesizing functions of that subunit. In Illicium oligandrum (Star anise), this protein is Large ribosomal subunit protein bL20c.